The following is a 748-amino-acid chain: 5-methyltetrahydropteroyltriglutamate--homocysteine methyltransferase (748 aa).

Residues 18–21 (REWK) and Lys-112 each bind 5-methyltetrahydropteroyltri-L-glutamate. L-homocysteine is bound by residues 420 to 422 (IGS) and Glu-473. L-methionine contacts are provided by residues 420–422 (IGS) and Glu-473. Trp-550 contributes to the 5-methyltetrahydropteroyltri-L-glutamate binding site. Asp-588 is a binding site for L-homocysteine. Asp-588 serves as a coordination point for L-methionine. Glu-594 provides a ligand contact to 5-methyltetrahydropteroyltri-L-glutamate. Residues His-630, Cys-632, and Glu-654 each coordinate Zn(2+). Catalysis depends on His-683, which acts as the Proton donor. Cys-715 serves as a coordination point for Zn(2+).

Belongs to the vitamin-B12 independent methionine synthase family. It depends on Zn(2+) as a cofactor.

It catalyses the reaction 5-methyltetrahydropteroyltri-L-glutamate + L-homocysteine = tetrahydropteroyltri-L-glutamate + L-methionine. The protein operates within amino-acid biosynthesis; L-methionine biosynthesis via de novo pathway; L-methionine from L-homocysteine (MetE route): step 1/1. In terms of biological role, catalyzes the transfer of a methyl group from 5-methyltetrahydrofolate to homocysteine resulting in methionine formation. In Staphylococcus epidermidis (strain ATCC 35984 / DSM 28319 / BCRC 17069 / CCUG 31568 / BM 3577 / RP62A), this protein is 5-methyltetrahydropteroyltriglutamate--homocysteine methyltransferase.